The primary structure comprises 150 residues: Large ribosomal subunit protein bL9 (150 aa).

This sequence belongs to the bacterial ribosomal protein bL9 family.

In terms of biological role, binds to the 23S rRNA. This Latilactobacillus sakei subsp. sakei (strain 23K) (Lactobacillus sakei subsp. sakei) protein is Large ribosomal subunit protein bL9.